The primary structure comprises 417 residues: Equilibrative nucleotide transporter 7 (417 aa).

A run of 11 helical transmembrane segments spans residues 19–39 (LVCC…LTIT), 54–74 (VLTI…ATKE), 84–104 (IFGY…DLAS), 110–130 (VVAY…DAFV), 143–163 (PDFI…TSVL), 184–204 (LFIG…TLVF), 264–284 (LGIN…GFLY), 293–315 (GDWY…RFIP), 326–346 (KWIT…YFTA), 353–373 (WMLF…VCIF), and 392–412 (MCVF…LWLI).

This sequence belongs to the SLC29A/ENT transporter (TC 2.A.57) family. In terms of tissue distribution, expressed in leaves and flowers.

The protein localises to the cell membrane. In terms of biological role, nucleoside transporter that can mediate uptake of adenosine, uridine, guanosine or cytidine when expressed in a heterologous system (yeast). The chain is Equilibrative nucleotide transporter 7 (ENT7) from Arabidopsis thaliana (Mouse-ear cress).